The chain runs to 477 residues: Metallopeptidase AprA (477 aa).

Residues 1–20 (MSKAKDKAIVSAAQASTAYS) form the signal peptide. H183 provides a ligand contact to Zn(2+). E184 is a catalytic residue. Residues H187 and H193 each contribute to the Zn(2+) site. R264, G266, T268, D296, G298, G299, D301, T338, E340, G345, G347, D349, N354, A356, N358, G362, G363, A364, G365, D367, G371, A372, G373, G374, D376, G380, G381, A382, G383, D385, D394, D401, D411, D453, S455, and D461 together coordinate Ca(2+). 3 Hemolysin-type calcium-binding repeats span residues 343–360 (FGGA…ANVI), 361–378 (KGGA…ADQL), and 379–391 (WGGA…VFGA).

It belongs to the peptidase M10B family. It depends on Ca(2+) as a cofactor. The cofactor is Zn(2+).

The protein resides in the secreted. Is completely inhibited by the metal cation chelators 1,10-phenanthroline and EDTA, but PMSF, pepstatin A and E-64 have no effect on activity. Peptidase able to cleave azocasein and the milk substrates beta-casein and Na-caseinate. Can withstand UHT processing of milk, and is able to spoil UHT milk over the storage period. This Pseudomonas marginalis (Pseudomonas panacis) protein is Metallopeptidase AprA.